The following is a 151-amino-acid chain: Large ribosomal subunit protein bL9 (151 aa).

This sequence belongs to the bacterial ribosomal protein bL9 family.

Its function is as follows. Binds to the 23S rRNA. The chain is Large ribosomal subunit protein bL9 from Pelodictyon phaeoclathratiforme (strain DSM 5477 / BU-1).